Consider the following 1080-residue polypeptide: Presequence protease 1, chloroplastic/mitochondrial (1080 aa).

The transit peptide at 1–85 directs the protein to the chloroplast and mitochondrion; the sequence is MLRTVSCLAS…GQFSRLSVRA (85 aa). An N-acetylvaline modification is found at valine 86. A Zn(2+)-binding site is contributed by histidine 162. Residue glutamate 165 is the Proton acceptor of the active site. Residue histidine 166 coordinates Zn(2+). The active site involves glutamate 240. Residue glutamate 262 coordinates Zn(2+). A coiled-coil region spans residues 571–612; the sequence is EKATQEEVEEKNILEKVKAAMTEEDLAELARATEELKLKQET. Arginine 705 is a binding site for Mg(2+).

The protein belongs to the peptidase M16 family. PreP subfamily. Homodimer. Zn(2+) is required as a cofactor. It depends on Mg(2+) as a cofactor. As to expression, expressed only in siliques and flowers.

The protein resides in the plastid. It is found in the chloroplast stroma. The protein localises to the mitochondrion matrix. With respect to regulation, inactive in the absence of MgCl(2) and CaCl(2) and full activation at 10 mM concentrations of either ion. Completely inhibited by the metal chelator orthophenanthroline, but not affected by phenylmethylsulfonyl fluoride (PMSF) or N-ethylmaleimide (NEM). Its function is as follows. ATP-independent protease that degrades both mitochondrial and chloroplastic transit peptides after their cleavage. Also degrades other unstructured peptides. Specific for peptides in the range of 10 to 65 residues. Shows a preference for cleavage after small polar residues and before basic residues, with a bias for positively charged amino acid residues. The protein is Presequence protease 1, chloroplastic/mitochondrial (PREP1) of Arabidopsis thaliana (Mouse-ear cress).